The following is a 323-amino-acid chain: Mycothiol acetyltransferase (323 aa).

N-acetyltransferase domains lie at 21-176 (ELLR…VSLR) and 173-323 (VSLR…LTKN). Glutamate 44 contributes to the 1D-myo-inositol 2-(L-cysteinylamino)-2-deoxy-alpha-D-glucopyranoside binding site. 98 to 100 (LAV) contributes to the acetyl-CoA binding site. Positions 200, 240, and 253 each coordinate 1D-myo-inositol 2-(L-cysteinylamino)-2-deoxy-alpha-D-glucopyranoside. Residues 257–259 (VGV) and 264–270 (QGLGLGK) each bind acetyl-CoA. Tyrosine 291 is a binding site for 1D-myo-inositol 2-(L-cysteinylamino)-2-deoxy-alpha-D-glucopyranoside.

This sequence belongs to the acetyltransferase family. MshD subfamily. In terms of assembly, monomer.

It carries out the reaction 1D-myo-inositol 2-(L-cysteinylamino)-2-deoxy-alpha-D-glucopyranoside + acetyl-CoA = mycothiol + CoA + H(+). Functionally, catalyzes the transfer of acetyl from acetyl-CoA to desacetylmycothiol (Cys-GlcN-Ins) to form mycothiol. The polypeptide is Mycothiol acetyltransferase (Paenarthrobacter aurescens (strain TC1)).